A 380-amino-acid polypeptide reads, in one-letter code: ATP phosphoribosyltransferase regulatory subunit (380 aa).

It belongs to the class-II aminoacyl-tRNA synthetase family. HisZ subfamily. As to quaternary structure, heteromultimer composed of HisG and HisZ subunits.

The protein resides in the cytoplasm. It participates in amino-acid biosynthesis; L-histidine biosynthesis; L-histidine from 5-phospho-alpha-D-ribose 1-diphosphate: step 1/9. In terms of biological role, required for the first step of histidine biosynthesis. May allow the feedback regulation of ATP phosphoribosyltransferase activity by histidine. The polypeptide is ATP phosphoribosyltransferase regulatory subunit (Thermoanaerobacter sp. (strain X514)).